A 280-amino-acid chain; its full sequence is 2,3,4,5-tetrahydropyridine-2,6-dicarboxylate N-succinyltransferase (280 aa).

The substrate site is built by Arg107 and Asp144.

It belongs to the transferase hexapeptide repeat family. Homotrimer.

The protein localises to the cytoplasm. It carries out the reaction (S)-2,3,4,5-tetrahydrodipicolinate + succinyl-CoA + H2O = (S)-2-succinylamino-6-oxoheptanedioate + CoA. It functions in the pathway amino-acid biosynthesis; L-lysine biosynthesis via DAP pathway; LL-2,6-diaminopimelate from (S)-tetrahydrodipicolinate (succinylase route): step 1/3. The protein is 2,3,4,5-tetrahydropyridine-2,6-dicarboxylate N-succinyltransferase of Paramagnetospirillum magneticum (strain ATCC 700264 / AMB-1) (Magnetospirillum magneticum).